The primary structure comprises 237 residues: Proteasome subunit beta type-1-B (237 aa).

It belongs to the peptidase T1B family. As to quaternary structure, the 26S proteasome consists of a 20S proteasome core and two 19S regulatory subunits. The 20S proteasome core is composed of 28 subunits that are arranged in four stacked rings, resulting in a barrel-shaped structure. The two end rings are each formed by seven alpha subunits, and the two central rings are each formed by seven beta subunits. The catalytic chamber with the active sites is on the inside of the barrel.

It localises to the cytoplasm. It is found in the nucleus. In terms of biological role, non-catalytic component of the proteasome, a multicatalytic proteinase complex which is characterized by its ability to cleave peptides with Arg, Phe, Tyr, Leu, and Glu adjacent to the leaving group at neutral or slightly basic pH. The proteasome has an ATP-dependent proteolytic activity. The chain is Proteasome subunit beta type-1-B (psmb1-B) from Carassius auratus (Goldfish).